We begin with the raw amino-acid sequence, 244 residues long: NAD(P)H-quinone oxidoreductase subunit K (244 aa).

[4Fe-4S] cluster-binding residues include C60, C61, C125, and C156.

It belongs to the complex I 20 kDa subunit family. NDH-1 can be composed of about 15 different subunits; different subcomplexes with different compositions have been identified which probably have different functions. [4Fe-4S] cluster is required as a cofactor.

Its subcellular location is the cellular thylakoid membrane. It catalyses the reaction a plastoquinone + NADH + (n+1) H(+)(in) = a plastoquinol + NAD(+) + n H(+)(out). It carries out the reaction a plastoquinone + NADPH + (n+1) H(+)(in) = a plastoquinol + NADP(+) + n H(+)(out). NDH-1 shuttles electrons from an unknown electron donor, via FMN and iron-sulfur (Fe-S) centers, to quinones in the respiratory and/or the photosynthetic chain. The immediate electron acceptor for the enzyme in this species is believed to be plastoquinone. Couples the redox reaction to proton translocation, and thus conserves the redox energy in a proton gradient. Cyanobacterial NDH-1 also plays a role in inorganic carbon-concentration. This Synechococcus sp. (strain CC9902) protein is NAD(P)H-quinone oxidoreductase subunit K.